The following is a 354-amino-acid chain: Heat-inducible transcription repressor HrcA (354 aa).

The protein belongs to the HrcA family.

Its function is as follows. Negative regulator of class I heat shock genes (grpE-dnaK-dnaJ and groELS operons). Prevents heat-shock induction of these operons. This chain is Heat-inducible transcription repressor HrcA, found in Herpetosiphon aurantiacus (strain ATCC 23779 / DSM 785 / 114-95).